The primary structure comprises 273 residues: Phycobilisome 32.1 kDa linker polypeptide, phycocyanin-associated, rod 2 (273 aa).

One can recognise a PBS-linker domain in the interval 1–180 (MTSLVSAQRL…VYRGYATSDR (180 aa)). Positions 220 to 273 (NQMYRLQVIQGAAPGRGTRVRRGKAEYLVSYDNLSAKLQQINRQGDTVTMISLA) constitute a CpcD-like domain.

It belongs to the phycobilisome linker protein family. In terms of assembly, part of 2 PBS rod complexes, the conventional CpcG-PBS rod and a photosystem I-specific CpcL-PBS rod, both of which include ferredoxin--NADP reductase (petH). CpcG-PBS has on average 3 stacked phycocyanin hexamers (PC, CpcA and CpcB). Linker CpcG connects the PC stack to the thylakoid, the hexamers are linked by 1 copy of CpcC1, 1 copy of CpcC2 and the stack is terminated by a single copy of CpcD. The CpcL-PBS has on average 5 stacked phycocyanin hexamers (PC, CpcA and CpcB). Linker CpcL connects the PC stack to the thylakoid, the hexamers are linked by 1 copy of CpcC1, 3 copies of CpcC2 and the stack is terminated by a single copy of CpcD. Interacts with the C-phycocyanin (PC) beta subunit (cpcB), it may fit into the center of the PC hexamer.

The protein localises to the cellular thylakoid membrane. Its function is as follows. Rod linker protein, associated with phycocyanin. Linker polypeptides determine the state of aggregation and the location of the disk-shaped phycobiliprotein units within the phycobilisome and modulate their spectroscopic properties in order to mediate a directed and optimal energy transfer. The polypeptide is Phycobilisome 32.1 kDa linker polypeptide, phycocyanin-associated, rod 2 (cpcC2) (Synechocystis sp. (strain ATCC 27184 / PCC 6803 / Kazusa)).